The primary structure comprises 237 residues: Protein ULTRAPETALA 1 (237 aa).

Positions 18-116 (EELQEMSGVN…SKTVLLKYYN (99 aa)) constitute an SAND domain. The segment at 133 to 191 (VCHRDEFVGCNDCGKERRFRLRSRDECRLHHNAMGDPNWKCSDFPYDKITCEEEEERGS) adopts a CW-type zinc-finger fold.

In terms of assembly, interacts with HHO5. Associates with ATX1 for trimethylating 'Lys-4' on histone H3 (H3K4me3) at flower MADS box gene loci. As to expression, expressed at low levels in seedlings, roots, shoots, leaves, stems, inflorescences, pollen, flowers and siliques, with highest levels dividing tissues including inflorescence.

The protein resides in the cytoplasm. Its subcellular location is the nucleus. Putative transcription factor that acts as a key negative regulator of cell accumulation in shoot and floral meristems. Negatively regulates the size of the WUSCHEL (WUS)-expressing organizing center in inflorescence meristems. May act by down-regulating expression of WUS. Acts as an antirepressor that counteracts EMF1 action through modulation of trimethylated 'Lys-4' on histone H3 (H3K4me3) marks on target gene loci (including genes involved in salt stress response and flower development). Collaboratively with RBL and CYP40/SQN, influences floral meristem (FM) determinacy in an AGAMOUS and SUPERMAN-dependent manner, thus contributing to the floral developmental homeostasis. The polypeptide is Protein ULTRAPETALA 1 (Arabidopsis thaliana (Mouse-ear cress)).